The primary structure comprises 759 residues: ARF GTPase-activating protein GIT2 (759 aa).

The 124-residue stretch at 1–124 (MSKRLRSSEV…AFVHRLPCRD (124 aa)) folds into the Arf-GAP domain. The C4-type zinc-finger motif lies at 11–34 (CADCSGPDPSWASVNRGTFLCDEC). ANK repeat units lie at residues 132–161 (DLSKQLHSSVRTGNLETCLRLLSLGAQANF), 166–195 (KGNTPLHVASKAGQILQAELLAVYGADPGT), and 199–228 (SGKTPVDYARQGGHHELAERLVEIQYELTD). The disordered stretch occupies residues 379–422 (QHSVESQDNDQPDYDSVASDEDTDLETTASKTNRQKSLDSDLSD). A compositionally biased stretch (acidic residues) spans 385-403 (QDNDQPDYDSVASDEDTDL). 2 positions are modified to phosphoserine: Ser394 and Ser397. Thr401 is modified (phosphothreonine). Phosphoserine is present on residues Ser415, Ser418, and Ser421. Residues 437–478 (LVASEAKIQQLMKVNNNLSDELRIMQKKLQTLQSENSNLRKQ) are a coiled coil. A compositionally biased stretch (polar residues) spans 480-499 (TTNVYQVQTGSEYTDTSNHS). 2 disordered regions span residues 480–538 (TTNV…EESR) and 554–643 (VTSS…TEDV). Tyr484 bears the Phosphotyrosine mark. The segment covering 555 to 569 (TSSSSLPSFPSTLSW) has biased composition (low complexity). 3 positions are modified to phosphoserine: Ser559, Ser562, and Ser570. A compositionally biased stretch (basic and acidic residues) spans 570 to 583 (SRDESARRASRLEK). The segment covering 584 to 597 (QNSTPESDYDNTPN) has biased composition (polar residues). Thr587 bears the Phosphothreonine mark. Position 614 is a phosphoserine (Ser614).

As to quaternary structure, may form heterooligomers with GIT1. Directly interacts with protein Piccolo/PCLO. Interacts with PPFIA1 and PPFIA2. Interacts with ARHGEF7. Identified in a complex with ARHGEF6 and BIN2. Interacts with PAK3. Interacts with PXN/paxillin. Interacts with TGFB1I1. Forms a complex with EFNB1 and GRB4/NCK2.

In terms of biological role, GTPase-activating protein for ADP ribosylation factor family members, including ARF1. The chain is ARF GTPase-activating protein GIT2 (GIT2) from Homo sapiens (Human).